Here is a 399-residue protein sequence, read N- to C-terminus: Nicotinate phosphoribosyltransferase (399 aa).

The residue at position 217 (H217) is a Phosphohistidine; by autocatalysis.

It belongs to the NAPRTase family. Transiently phosphorylated on a His residue during the reaction cycle. Phosphorylation strongly increases the affinity for substrates and increases the rate of nicotinate D-ribonucleotide production. Dephosphorylation regenerates the low-affinity form of the enzyme, leading to product release.

The catalysed reaction is nicotinate + 5-phospho-alpha-D-ribose 1-diphosphate + ATP + H2O = nicotinate beta-D-ribonucleotide + ADP + phosphate + diphosphate. Its pathway is cofactor biosynthesis; NAD(+) biosynthesis; nicotinate D-ribonucleotide from nicotinate: step 1/1. In terms of biological role, catalyzes the synthesis of beta-nicotinate D-ribonucleotide from nicotinate and 5-phospho-D-ribose 1-phosphate at the expense of ATP. This chain is Nicotinate phosphoribosyltransferase, found in Burkholderia ambifaria (strain MC40-6).